The primary structure comprises 123 residues: Anti-lipopolysaccharide factor (123 aa).

The signal sequence occupies residues 1–26 (MRKGVVAGLCLALVVMCLYLPQPCEA). Asparagine 45 carries N-linked (GlcNAc...) asparagine glycosylation. A disulfide bridge links cysteine 55 with cysteine 76.

As to expression, isoform 1 is highly expressed in muscle and stomach, moderately in heart and gill and at lower levels in hemocytes and hepatopancreas. Isoform 2 is mainly expressed in gill, hepatopancreas, muscle and eyestalk.

Its subcellular location is the secreted. Functionally, may bind to bacterial LPS and thus specifically inhibit the LPS-mediated activation of the hemolymph coagulation. It has a strong antibacterial effect especially on the growth of Gram-negative bacteria. The protein is Anti-lipopolysaccharide factor of Portunus trituberculatus (Swimming crab).